A 402-amino-acid polypeptide reads, in one-letter code: Galactoside 2-alpha-L-fucosyltransferase (402 aa).

Topologically, residues 1 to 6 (MRYNSN) are cytoplasmic. Residues 7–27 (YLMYFCLVLGIFANIYVIIKI) traverse the membrane as a helical; Signal-anchor for type II membrane protein segment. At 28 to 402 (TLGSSHILEY…TDLNGKISKY (375 aa)) the chain is on the lumenal side. N-linked (GlcNAc...) asparagine glycosylation is found at asparagine 119, asparagine 175, and asparagine 301.

It belongs to the glycosyltransferase 11 family. As to quaternary structure, may form oligomers. In terms of processing, N-glycosylated. Expression is restricted to pharyngeal neurons and gland cells.

Its subcellular location is the golgi apparatus. It localises to the golgi stack membrane. The protein operates within protein modification; protein glycosylation. Its function is as follows. Selectively catalyzes the addition of fucose in alpha 1-2 linkage to Gal-beta-(1-&gt;3)-GalNAc-alpha-R, Gal-beta-(1-&gt;3)-(GlcNAc-beta-(1-&gt;6))-GalNAc-alpha-R and Gal-beta-(1-&gt;3)-GalNAc acceptors but not Gal-beta-(1-&gt;3)-GlcNAc-beta-(1-&gt;3)-Gal-beta-(1-&gt;4)-Glc in vitro. The polypeptide is Galactoside 2-alpha-L-fucosyltransferase (Caenorhabditis elegans).